A 607-amino-acid chain; its full sequence is Granule-bound starch synthase 1, chloroplastic/amyloplastic (607 aa).

The N-terminal 77 residues, 1–77 (MASITASHHF…RPGCSATIVC (77 aa)), are a transit peptide targeting the chloroplast. K95 contributes to the ADP-alpha-D-glucose binding site. Positions 585–607 (SGSEPGVEGEEIAPLAKENVATP) are disordered.

Belongs to the glycosyltransferase 1 family. Bacterial/plant glycogen synthase subfamily.

The protein resides in the plastid. It is found in the chloroplast. The protein localises to the amyloplast. The enzyme catalyses an NDP-alpha-D-glucose + [(1-&gt;4)-alpha-D-glucosyl](n) = [(1-&gt;4)-alpha-D-glucosyl](n+1) + a ribonucleoside 5'-diphosphate + H(+). The protein operates within glycan biosynthesis; starch biosynthesis. The sequence is that of Granule-bound starch synthase 1, chloroplastic/amyloplastic (WAXY) from Solanum tuberosum (Potato).